The primary structure comprises 138 residues: Cysteine desulfuration protein SufE (138 aa).

C51 (cysteine persulfide intermediate) is an active-site residue.

The protein belongs to the SufE family. Homodimer. Interacts with SufS.

It localises to the cytoplasm. The protein operates within cofactor biosynthesis; iron-sulfur cluster biosynthesis. Its function is as follows. Participates in cysteine desulfuration mediated by SufS. Cysteine desulfuration mobilizes sulfur from L-cysteine to yield L-alanine and constitutes an essential step in sulfur metabolism for biosynthesis of a variety of sulfur-containing biomolecules. Functions as a sulfur acceptor for SufS, by mediating the direct transfer of the sulfur atom from the S-sulfanylcysteine of SufS, an intermediate product of cysteine desulfuration process. The polypeptide is Cysteine desulfuration protein SufE (Pectobacterium carotovorum subsp. carotovorum (strain PC1)).